The sequence spans 75 residues: Putative defensin-like protein 271 (75 aa).

The N-terminal stretch at 1–23 (MTSMKLHIVALCIIVSFLVNVQS) is a signal peptide. 4 cysteine pairs are disulfide-bonded: cysteine 33–cysteine 72, cysteine 39–cysteine 61, cysteine 45–cysteine 70, and cysteine 49–cysteine 71.

This sequence belongs to the DEFL family.

Its subcellular location is the secreted. The sequence is that of Putative defensin-like protein 271 from Arabidopsis thaliana (Mouse-ear cress).